The primary structure comprises 101 residues: Large ribosomal subunit protein uL24 (101 aa).

Belongs to the universal ribosomal protein uL24 family. As to quaternary structure, part of the 50S ribosomal subunit.

In terms of biological role, one of two assembly initiator proteins, it binds directly to the 5'-end of the 23S rRNA, where it nucleates assembly of the 50S subunit. Functionally, one of the proteins that surrounds the polypeptide exit tunnel on the outside of the subunit. In Borreliella burgdorferi (strain ATCC 35210 / DSM 4680 / CIP 102532 / B31) (Borrelia burgdorferi), this protein is Large ribosomal subunit protein uL24.